The chain runs to 247 residues: ATP synthase subunit a, chloroplastic (247 aa).

5 helical membrane-spanning segments follow: residues 38–58 (QVLI…IIAV), 95–115 (VPFI…GALL), 134–154 (INTT…AGLS), 199–219 (LVVV…VMFL), and 220–240 (GLFT…AYIG).

Belongs to the ATPase A chain family. F-type ATPases have 2 components, CF(1) - the catalytic core - and CF(0) - the membrane proton channel. CF(1) has five subunits: alpha(3), beta(3), gamma(1), delta(1), epsilon(1). CF(0) has four main subunits: a, b, b' and c.

The protein localises to the plastid. Its subcellular location is the chloroplast thylakoid membrane. In terms of biological role, key component of the proton channel; it plays a direct role in the translocation of protons across the membrane. The sequence is that of ATP synthase subunit a, chloroplastic from Cucumis sativus (Cucumber).